A 1150-amino-acid polypeptide reads, in one-letter code: GPI inositol-deacylase (1150 aa).

The tract at residues 1 to 43 is disordered; the sequence is MQGRPNGASGDPNPRNDTSVTIDSDSDNGSRHRIAEVRGSSPS. N-linked (GlcNAc...) asparagine glycosylation is found at Asn-16 and Asn-28. Residues 122–142 traverse the membrane as a helical segment; sequence ICSGLVLFVTVSALLILSIIV. Residue Ser-309 is part of the active site. Residues 790–810 form a helical membrane-spanning segment; sequence LAMRYRTVFAAFPLLVVSLVL. Asn-818 carries N-linked (GlcNAc...) asparagine glycosylation. Residues 829 to 849 form a helical membrane-spanning segment; it reads ALDLCIRSSIPLLFLGLTFLA. N-linked (GlcNAc...) asparagine glycosylation is present at Asn-870. A helical membrane pass occupies residues 890–910; it reads AFFWFLVPLFGIISIGTCVIV. Asn-942 carries N-linked (GlcNAc...) asparagine glycosylation. The next 5 helical transmembrane spans lie at 960-980, 1010-1030, 1047-1067, 1079-1099, and 1102-1122; these read VLLL…VACV, SIFI…IVWI, VFSI…TMIP, VLFF…AYLL, and ITNL…GFSL. 2 N-linked (GlcNAc...) asparagine glycosylation sites follow: Asn-1124 and Asn-1130.

Belongs to the GPI inositol-deacylase family.

Its subcellular location is the endoplasmic reticulum membrane. In terms of biological role, involved in inositol deacylation of GPI-anchored proteins which plays important roles in the quality control and ER-associated degradation of GPI-anchored proteins. This Coccidioides immitis (strain RS) (Valley fever fungus) protein is GPI inositol-deacylase (BST1).